We begin with the raw amino-acid sequence, 328 residues long: Nucleotide-binding protein Blon_1085/BLIJ_1109 (328 aa).

Residues 1 to 33 (MSQQTTIRDTGEAAATNAPANSATSTSTPDNQP) form a disordered region. Positions 13–29 (AAATNAPANSATSTSTP) are enriched in low complexity. An ATP-binding site is contributed by 46 to 53 (GMSGAGRS). Residue 101 to 104 (DVRS) coordinates GTP.

This sequence belongs to the RapZ-like family.

Functionally, displays ATPase and GTPase activities. This is Nucleotide-binding protein Blon_1085/BLIJ_1109 from Bifidobacterium longum subsp. infantis (strain ATCC 15697 / DSM 20088 / JCM 1222 / NCTC 11817 / S12).